The sequence spans 257 residues: Ribonuclease HII (257 aa).

Positions glutamate 71–lysine 257 constitute an RNase H type-2 domain. The a divalent metal cation site is built by aspartate 77, glutamate 78, and aspartate 169.

The protein belongs to the RNase HII family. The cofactor is Mn(2+). It depends on Mg(2+) as a cofactor.

It localises to the cytoplasm. The enzyme catalyses Endonucleolytic cleavage to 5'-phosphomonoester.. Endonuclease that specifically degrades the RNA of RNA-DNA hybrids. The chain is Ribonuclease HII (rnhB) from Lactococcus lactis subsp. cremoris (strain MG1363).